The following is a 302-amino-acid chain: ATP synthase gamma chain, sodium ion specific (302 aa).

This sequence belongs to the ATPase gamma chain family. In terms of assembly, F-type ATPases have 2 components, CF(1) - the catalytic core - and CF(0) - the membrane proton channel. CF(1) has five subunits: alpha(3), beta(3), gamma(1), delta(1), epsilon(1). CF(0) has three main subunits: a, b and c.

The protein localises to the cell membrane. Its activity is regulated as follows. Inhibited by nitrate. Its function is as follows. Produces ATP from ADP in the presence of a proton gradient across the membrane. The gamma chain is believed to be important in regulating ATPase activity and the flow of protons through the CF(0) complex. This Acetobacterium woodii (strain ATCC 29683 / DSM 1030 / JCM 2381 / KCTC 1655 / WB1) protein is ATP synthase gamma chain, sodium ion specific (atpG).